A 136-amino-acid chain; its full sequence is Probable acyltransferase SID5 (136 aa).

It functions in the pathway siderophore biosynthesis. Its function is as follows. Probable acyltransferase; part of the gene cluster that mediates the biosynthesis of hydroxamate-containing siderophores that play a critical role in virulence via intracellular iron acquisition during macrophage infection. In Ajellomyces capsulatus (Darling's disease fungus), this protein is Probable acyltransferase SID5.